The sequence spans 149 residues: Putative pre-16S rRNA nuclease (149 aa).

The protein belongs to the YqgF nuclease family.

The protein localises to the cytoplasm. Its function is as follows. Could be a nuclease involved in processing of the 5'-end of pre-16S rRNA. This chain is Putative pre-16S rRNA nuclease, found in Synechococcus sp. (strain ATCC 27144 / PCC 6301 / SAUG 1402/1) (Anacystis nidulans).